The following is a 346-amino-acid chain: Biotin synthase (346 aa).

The Radical SAM core domain maps to 38–256; it reads RQVQVSTLLS…IAVARIMMPT (219 aa). [4Fe-4S] cluster-binding residues include C53, C57, and C60. [2Fe-2S] cluster is bound by residues C97, C128, C188, and R260.

Belongs to the radical SAM superfamily. Biotin synthase family. As to quaternary structure, homodimer. It depends on [4Fe-4S] cluster as a cofactor. [2Fe-2S] cluster is required as a cofactor.

The enzyme catalyses (4R,5S)-dethiobiotin + (sulfur carrier)-SH + 2 reduced [2Fe-2S]-[ferredoxin] + 2 S-adenosyl-L-methionine = (sulfur carrier)-H + biotin + 2 5'-deoxyadenosine + 2 L-methionine + 2 oxidized [2Fe-2S]-[ferredoxin]. The protein operates within cofactor biosynthesis; biotin biosynthesis; biotin from 7,8-diaminononanoate: step 2/2. Functionally, catalyzes the conversion of dethiobiotin (DTB) to biotin by the insertion of a sulfur atom into dethiobiotin via a radical-based mechanism. The polypeptide is Biotin synthase (Escherichia coli O157:H7).